Here is a 252-residue protein sequence, read N- to C-terminus: Small ribosomal subunit protein eS1 (252 aa).

It belongs to the eukaryotic ribosomal protein eS1 family. In terms of assembly, component of the small ribosomal subunit. Mature ribosomes consist of a small (40S) and a large (60S) subunit. The 40S subunit contains about 33 different proteins and 1 molecule of RNA (18S). The 60S subunit contains about 49 different proteins and 3 molecules of RNA (25S, 5.8S and 5S).

It localises to the cytoplasm. This Enterocytozoon bieneusi (strain H348) (Microsporidian parasite) protein is Small ribosomal subunit protein eS1.